The following is a 319-amino-acid chain: High mobility group B protein 10 (319 aa).

The segment covering 1–13 (MSTDISPPYSQTH) has biased composition (polar residues). The segment at 1-25 (MSTDISPPYSQTHVEPVNGYPSDNK) is disordered. Residues 40 to 131 (VRNSALFWEK…FLFQLEHVYY (92 aa)) enclose the ARID domain. Positions 203–220 (PSQSQQTMETPSAIVQSS) are enriched in polar residues. The interval 203-230 (PSQSQQTMETPSAIVQSSQRRHRKKSKL) is disordered. Residues 238–305 (PKCHRSGYNF…RYRIEMLEYK (68 aa)) constitute a DNA-binding region (HMG box).

In terms of tissue distribution, ubiquitously expressed.

The protein localises to the nucleus. Its function is as follows. Binds preferentially DNA with A/T-rich content. This is High mobility group B protein 10 (HMGB10) from Arabidopsis thaliana (Mouse-ear cress).